Reading from the N-terminus, the 325-residue chain is Probable cell division protein WhiA (325 aa).

Positions 273–306 (SLEELGALADPPLTKDAVAGRIRRLLALADKRAN) form a DNA-binding region, H-T-H motif.

The protein belongs to the WhiA family.

Functionally, involved in cell division and chromosome segregation. This chain is Probable cell division protein WhiA, found in Frankia alni (strain DSM 45986 / CECT 9034 / ACN14a).